The primary structure comprises 383 residues: Protein COS7 (383 aa).

At 1 to 42 (MKENEVKDEKSVDVLSFKQLESQKIVLPQDLFRSSFTWFCYE) the chain is on the cytoplasmic side. A helical membrane pass occupies residues 43–63 (IYKSLAFRIWMLLWLPLSVWW). Over 64–72 (KLSNNCIYP) the chain is Extracellular. Residues 73–93 (LIVSLLVLFLGPIFVLVICGL) form a helical membrane-spanning segment. Residues 94-232 (SRKRSLSKQL…RSKLTWFLKR (139 aa)) are Cytoplasmic-facing. Residues 233–253 (IFTIYSLPLWLAFLNCICVSQ) form a helical membrane-spanning segment. Position 254 (histidine 254) is a topological domain, extracellular. Residues 255 to 275 (FCLAFRILCPGLFFLMMVWLF) form a helical membrane-spanning segment. The Cytoplasmic segment spans residues 276–383 (QNMRTTALLV…SRNEESLMKK (108 aa)).

It belongs to the DUP/COS family.

Its subcellular location is the membrane. The protein is Protein COS7 (COS7) of Saccharomyces cerevisiae (strain ATCC 204508 / S288c) (Baker's yeast).